The primary structure comprises 176 residues: Adenine phosphoribosyltransferase (176 aa).

This sequence belongs to the purine/pyrimidine phosphoribosyltransferase family. In terms of assembly, homodimer.

It is found in the cytoplasm. It catalyses the reaction AMP + diphosphate = 5-phospho-alpha-D-ribose 1-diphosphate + adenine. It functions in the pathway purine metabolism; AMP biosynthesis via salvage pathway; AMP from adenine: step 1/1. Its function is as follows. Catalyzes a salvage reaction resulting in the formation of AMP, that is energically less costly than de novo synthesis. This chain is Adenine phosphoribosyltransferase, found in Bacteroides thetaiotaomicron (strain ATCC 29148 / DSM 2079 / JCM 5827 / CCUG 10774 / NCTC 10582 / VPI-5482 / E50).